The following is a 628-amino-acid chain: UvrABC system protein C (628 aa).

Residues 20 to 99 (TSAGVYLMRD…IKTHKPRYNV (80 aa)) form the GIY-YIG domain. The UVR domain maps to 209–244 (AELLAQLEDQMQTAAAAMNFEHAARLRDRITGLNQL).

It belongs to the UvrC family. In terms of assembly, interacts with UvrB in an incision complex.

It localises to the cytoplasm. Its function is as follows. The UvrABC repair system catalyzes the recognition and processing of DNA lesions. UvrC both incises the 5' and 3' sides of the lesion. The N-terminal half is responsible for the 3' incision and the C-terminal half is responsible for the 5' incision. The sequence is that of UvrABC system protein C from Gloeobacter violaceus (strain ATCC 29082 / PCC 7421).